The sequence spans 298 residues: Tryptophan 2,3-dioxygenase (298 aa).

Substrate is bound by residues 51–55, Tyr-113, and Arg-117; that span reads FIIQH. His-240 is a heme binding site. Thr-254 contributes to the substrate binding site.

It belongs to the tryptophan 2,3-dioxygenase family. Homotetramer. It depends on heme as a cofactor.

The catalysed reaction is L-tryptophan + O2 = N-formyl-L-kynurenine. It participates in amino-acid degradation; L-tryptophan degradation via kynurenine pathway; L-kynurenine from L-tryptophan: step 1/2. Its function is as follows. Heme-dependent dioxygenase that catalyzes the oxidative cleavage of the L-tryptophan (L-Trp) pyrrole ring and converts L-tryptophan to N-formyl-L-kynurenine. Catalyzes the oxidative cleavage of the indole moiety. In Xanthomonas euvesicatoria pv. vesicatoria (strain 85-10) (Xanthomonas campestris pv. vesicatoria), this protein is Tryptophan 2,3-dioxygenase.